The following is a 1412-amino-acid chain: DNA-directed RNA polymerase subunit beta' (1412 aa).

Zn(2+) contacts are provided by Cys-70, Cys-72, Cys-85, and Cys-88. Residues Asp-460, Asp-462, and Asp-464 each contribute to the Mg(2+) site. Cys-814, Cys-888, Cys-895, and Cys-898 together coordinate Zn(2+). The interval 1378 to 1412 is disordered; that stretch reads EREAARQLANPFEDAPVTVDADAPQSDAGQEGSAE.

The protein belongs to the RNA polymerase beta' chain family. In terms of assembly, the RNAP catalytic core consists of 2 alpha, 1 beta, 1 beta' and 1 omega subunit. When a sigma factor is associated with the core the holoenzyme is formed, which can initiate transcription. The cofactor is Mg(2+). Zn(2+) serves as cofactor.

It catalyses the reaction RNA(n) + a ribonucleoside 5'-triphosphate = RNA(n+1) + diphosphate. DNA-dependent RNA polymerase catalyzes the transcription of DNA into RNA using the four ribonucleoside triphosphates as substrates. The polypeptide is DNA-directed RNA polymerase subunit beta' (Bordetella petrii (strain ATCC BAA-461 / DSM 12804 / CCUG 43448)).